A 122-amino-acid chain; its full sequence is UPF0102 protein Dred_2035 (122 aa).

The protein belongs to the UPF0102 family.

The sequence is that of UPF0102 protein Dred_2035 from Desulforamulus reducens (strain ATCC BAA-1160 / DSM 100696 / MI-1) (Desulfotomaculum reducens).